Consider the following 2474-residue polypeptide: MNKYINKYTTPPNLLSLRQRAEGKHRTRKKLTHKSHSHDDEMSTTSNTDSNHNGPNDSGRVITGSAGHIGKISFVDSELDTTFSTLNLIFDKLKSDVPQERASGANELSTTLTSLAREVSAEQFQRFSNSLNNKIFELIHGFTSSEKIGGILAVDTLISFYLSTEELPNQTSRLANYLRVLIPSSDIEVMRLAANTLGRLTVPGGTLTSDFVEFEVRTCIDWLTLTADNNSSSSKLEYRRHAALLIIKALADNSPYLLYPYVNSILDNIWVPLRDAKLIIRLDAAVALGKCLTIIQDRDPALGKQWFQRLFQGCTHGLSLNTNDSVHATLLVFRELLSLKAPYLRDKYDDIYKSTMKYKEYKFDVIRREVYAILPLLAAFDPAIFTKKYLDRIMVHYLRYLKNIDMNAANNSDKPFILVSIGDIAFEVGSSISPYMTLILDNIREGLRTKFKVRKQFEKDLFYCIGKLACALGPAFAKHLNKDLLNLMLNCPMSDHMQETLMILNEKIPSLESTVNSRILNLLSISLSGEKFIQSNQYDFNNQFSIEKARKSRNQSFMKKTGESNDDITDAQILIQCFKMLQLIHHQYSLTEFVRLITISYIEHEDSSVRKLAALTSCDLFIKDDICKQTSVHALHSVSEVLSKLLMIAITDPVAEIRLEILQHLGSNFDPQLAQPDNLRLLFMALNDEIFGIQLEAIKIIGRLSSVNPAYVVPSLRKTLLELLTQLKFSNMPKKKEESATLLCTLINSSDEVAKPYIDPILDVILPKCQDASSAVASTALKVLGELSVVGGKEMTRYLKELMPLIINTFQDQSNSFKRDAALTTLGQLAASSGYVVGPLLDYPELLGILINILKTENNPHIRRGTVRLIGILGALDPYKHREIEVTSNSKSSVEQNAPSIDIALLMQGVSPSNDEYYPTVVIHNLMKILNDPSLSIHHTAAIQAIMHIFQNLGLRCVSFLDQIIPGIILVMRSCPPSQLDFYFQQLGSLISIVKQHIRPHVEKIYGVIREFFPIIKLQITIISVIESISKALEGEFKRFVPETLTFFLDILENDQSNKRIVPIRILKSLVTFGPNLEDYSHLIMPIVVRMTEYSAGSLKKISIITLGRLAKNINLSEMSSRIVQALVRILNNGDRELTKATMNTLSLLLLQLGTDFVVFVPVINKALLRNRIQHSVYDQLVNKLLNNECLPTNIIFDKENEVPERKNYEDEMQVTKLPVNQNILKNAWYCSQQKTKEDWQEWIRRLSIQLLKESPSACLRSCSSLVSVYYPLARELFNASFSSCWVELQTSYQEDLIQALCKALSSSENPPEIYQMLLNLVEFMEHDDKPLPIPIHTLGKYAQKCHAFAKALHYKEVEFLEEPKNSTIEALISINNQLHQTDSAIGILKHAQQHNELQLKETWYEKLQRWEDALAAYNEKEAAGEDSVEVMMGKLRSLYALGEWEELSKLASEKWGTAKPEVKKAMAPLAAGAAWGLEQWDEIAQYTSVMKSQSPDKEFYDAILCLHRNNFKKAEVHIFNARDLLVTELSALVNESYNRAYNVVVRAQIIAELEEIIKYKKLPQNSDKRLTMRETWNTRLLGCQKNIDVWQRILRVRSLVIKPKEDAQVRIKFANLCRKSGRMALAKKVLNTLLEETDDPDHPNTAKASPPVVYAQLKYLWATGLQDEALKQLINFTSRMAHDLGLDPNNMIAQSVPQQSKRVPRHVEDYTKLLARCFLKQGEWRVCLQPKWRLSNPDSILGSYLLATHFDNTWYKAWHNWALANFEVISMLTSVSKKKQEGSDASSVTDINEFDNGMIGVNTFDAKEVHYSSNLIHRHVIPAIKGFFHSISLSESSSLQDALRLLTLWFTFGGIPEATQAMHEGFNLIQIGTWLEVLPQLISRIHQPNQIVSRSLLSLLSDLGKAHPQALVYPLMVAIKSESLSRQKAALSIIEKMRIHSPVLVDQAELVSHELIRMAVLWHEQWYEGLDDASRQFFGEHNTEKMFAALEPLYEMLKRGPETLREISFQNSFGRDLNDAYEWLMNYKKSKDVSNLNQAWDIYYNVFRKIGKQLPQLQTLELQHVSPKLLSAHDLELAVPGTRASGGKPIVKISKFEPVFSVISSKQRPRKFCIKGSDGKDYKYVLKGHEDIRQDSLVMQLFGLVNTLLQNDAECFRRHLDIQQYPAIPLSPKSGLLGWVPNSDTFHVLIREHREAKKIPLNIEHWVMLQMAPDYDNLTLLQKVEVFTYALNNTEGQDLYKVLWLKSRSSETWLERRTTYTRSLAVMSMTGYILGLGDRHPSNLMLDRITGKVIHIDFGDCFEAAILREKFPEKVPFRLTRMLTYAMEVSGIEGSFRITCENVMKVLRDNKGSLMAILEAFAFDPLINWGFDLPTKKIEEETGIQLPVMNANELLSNGAITEEEVQRVENEHKNAIRNARAMLVLKRITDKLTGNDIRRFNDLDVPEQVDKLIQQATSVENLCQHYIGWCPFW.

Residues 1–62 (MNKYINKYTT…NGPNDSGRVI (62 aa)) are disordered. The residue at position 10 (threonine 10) is a Phosphothreonine. Residues 25-36 (HRTRKKLTHKSH) are compositionally biased toward basic residues. Residues 43–56 (STTSNTDSNHNGPN) show a composition bias toward polar residues. 11 HEAT repeats span residues 588 to 626 (YSLTEFVRLITISYIEHEDSSVRKLAALTSCDLFIKDDI), 636 to 674 (HSVSEVLSKLLMIAITDPVAEIRLEILQHLGSNFDPQLA), 676 to 710 (PDNLRLLFMALNDEIFGIQLEAIKIIGRLSSVNPA), 756 to 793 (PYIDPILDVILPKCQDASSAVASTALKVLGELSVVGGK), 797 to 835 (RYLKELMPLIINTFQDQSNSFKRDAALTTLGQLAASSGY), 841 to 879 (LDYPELLGILINILKTENNPHIRRGTVRLIGILGALDPY), 917 to 955 (YYPTVVIHNLMKILNDPSLSIHHTAAIQAIMHIFQNLGL), 1039 to 1076 (RFVPETLTFFLDILENDQSNKRIVPIRILKSLVTFGPN), 1079 to 1116 (DYSHLIMPIVVRMTEYSAGSLKKISIITLGRLAKNINL), 1118 to 1155 (EMSSRIVQALVRILNNGDRELTKATMNTLSLLLLQLGT), and 1292 to 1331 (SYQEDLIQALCKALSSSENPPEIYQMLLNLVEFMEHDDKP). Residues 1338-1922 (TLGKYAQKCH…VYPLMVAIKS (585 aa)) form the FAT domain. The PI3K/PI4K catalytic domain maps to 2097-2421 (FEPVFSVISS…EHKNAIRNAR (325 aa)). A G-loop region spans residues 2103-2109 (VISSKQR). Residues 2276–2284 (GLGDRHPSN) form a catalytic loop region. Residues 2296–2321 (HIDFGDCFEAAILREKFPEKVPFRLT) form an activation loop region. The 33-residue stretch at 2442 to 2474 (NDLDVPEQVDKLIQQATSVENLCQHYIGWCPFW) folds into the FATC domain.

Belongs to the PI3/PI4-kinase family. In terms of assembly, the target of rapamycin complex 1 (TORC1) is composed of at least KOG1, LST8, TCO89 and either TOR1 (TORC1-A) or TOR2 (TORC1-B). TORC1 binds to and is inhibited by FKBP-rapamycin. Interacts with PIB2; following activation of PIB2 by glutamine. The target of rapamycin complex 2 (TORC2) is composed of at least AVO1, AVO2, BIT61, LST8, TOR2 and TSC11. TORC2 forms a homodimer. Contrary to TORC1, TORC2 does not bind to and is not sensitive to FKBP-rapamycin. Interacts with SLM1 and SLM2.

The protein resides in the cell membrane. It is found in the vacuole membrane. The enzyme catalyses L-seryl-[protein] + ATP = O-phospho-L-seryl-[protein] + ADP + H(+). The catalysed reaction is L-threonyl-[protein] + ATP = O-phospho-L-threonyl-[protein] + ADP + H(+). It carries out the reaction a 1,2-diacyl-sn-glycero-3-phospho-(1D-myo-inositol) + ATP = a 1,2-diacyl-sn-glycero-3-phospho-(1D-myo-inositol 4-phosphate) + ADP + H(+). Functionally, phosphatidylinositol 3-kinase homolog, component of both TORC1 and TORC2. TORC1 regulates multiple cellular processes to control cell growth in response to environmental signals. Nutrient limitation and environmental stress signals cause inactivation of TORC1. Active TORC1 positively controls ribosome biogenesis via control of rRNA, ribosomal protein and tRNA gene expression, and rRNA processing. TORC1 positively controls protein biosynthesis by regulation of mRNA stability, translation initiation factor activity, and high-affinity amino acid permeases that serve to provide amino acids for use by the translation machinery. TORC1 also promotes growth by sequestering a number of nutrient and general stress-responsive transcription factors in the cytoplasm. TORC1 negatively controls macroautophagy, a process to recycle surplus cytoplasmic mass under nutrient starvation conditions. TORC1 controls many of these processes via TIP41-TAP42-mediated inhibition of the type 2A-related phosphatases PP2A and SIT4. In nutrient-rich conditions, responsible for the phosphorylation of AGC S6 kinase (S6K) YPK3, activating YPK3 kinase activity and promoting phosphorylation of ribosomal protein S6. Phosphorylates kinase SCH9 at 6 amino acids in the C-terminus, activating SCH9 kinase activity to properly regulate ribosome biogenesis, translation initiation, and entry into stationary phase. TORC2 regulates cell cycle-dependent polarization of the actin-cytoskeleton, cell wall integrity, and receptor endocytosis. TORC2 controls polarity of the actin cytoskeleton, which is required for orienting the secretory pathway toward discrete growth sites, via the RHO1/PKC1/MAPK cell integrity pathway by activating the RHO1 guanine nucleotide exchange factor ROM2. TORC2 phosphorylates the AGC kinase YPK2, an upstream effector of the cell integrity pathway. TORC2 negatively regulates calcineurin-dependent stress signaling via phosphorylation of its effector SLM1-SLM2. This is Serine/threonine-protein kinase TOR2 (TOR2) from Saccharomyces cerevisiae (strain ATCC 204508 / S288c) (Baker's yeast).